We begin with the raw amino-acid sequence, 87 residues long: Small ribosomal subunit protein uS17 (87 aa).

This sequence belongs to the universal ribosomal protein uS17 family. In terms of assembly, part of the 30S ribosomal subunit.

Functionally, one of the primary rRNA binding proteins, it binds specifically to the 5'-end of 16S ribosomal RNA. The protein is Small ribosomal subunit protein uS17 of Pelotomaculum thermopropionicum (strain DSM 13744 / JCM 10971 / SI).